The sequence spans 153 residues: Ribosome maturation factor RimP (153 aa).

The protein belongs to the RimP family.

The protein resides in the cytoplasm. In terms of biological role, required for maturation of 30S ribosomal subunits. This chain is Ribosome maturation factor RimP, found in Burkholderia pseudomallei (strain 1710b).